A 91-amino-acid polypeptide reads, in one-letter code: Large ribosomal subunit protein uL22 (91 aa).

It belongs to the universal ribosomal protein uL22 family. In terms of assembly, part of the 50S ribosomal subunit.

In terms of biological role, this protein binds specifically to 23S rRNA; its binding is stimulated by other ribosomal proteins, e.g. L4, L17, and L20. It is important during the early stages of 50S assembly. It makes multiple contacts with different domains of the 23S rRNA in the assembled 50S subunit and ribosome. Its function is as follows. The globular domain of the protein is located near the polypeptide exit tunnel on the outside of the subunit, while an extended beta-hairpin is found that lines the wall of the exit tunnel in the center of the 70S ribosome. The sequence is that of Large ribosomal subunit protein uL22 (rplV) from Clover yellow edge phytoplasma.